Here is a 317-residue protein sequence, read N- to C-terminus: Pseudouridine-5'-phosphate glycosidase (317 aa).

The active-site Proton donor is the E27. Residues K89 and V109 each contribute to the substrate site. D141 serves as a coordination point for Mn(2+). A substrate-binding site is contributed by 143-145 (SAD). K162 (nucleophile) is an active-site residue.

Belongs to the pseudouridine-5'-phosphate glycosidase family. Homotrimer. Requires Mn(2+) as cofactor.

The enzyme catalyses D-ribose 5-phosphate + uracil = psi-UMP + H2O. In terms of biological role, catalyzes the reversible cleavage of pseudouridine 5'-phosphate (PsiMP) to ribose 5-phosphate and uracil. Functions biologically in the cleavage direction, as part of a pseudouridine degradation pathway. The chain is Pseudouridine-5'-phosphate glycosidase from Sorangium cellulosum (strain So ce56) (Polyangium cellulosum (strain So ce56)).